The sequence spans 360 residues: MLVPTALAARLLSLFQQQLGSLWSGLAMLFCWLRIALGWPDPGKGQPRVRGEPKETQETHEDPGSAQPTTPVSVNYHFTRQCNYKCGFCFHTAKTSFVLPLEEAKRGLLLLKQAGMEKINFSGGEPFLQDRGEYLGKLVRFCKEELALPSVSIVSNGSLIRERWFKDYGDYLDILAISCDSFDEQVNVLIGRGQGKKNHVENLQKLRKWCRDYKVAFKINSVINRFNVDEDMNEHIKALSPVRWKVFQCLLIEGENSGEDALREAERFLISNEEFEAFLQRHKDVSCLVPESNQKMKDSYLILDEYMRFLNCTGGRKDPSRSILDVGVEEAIKFSGFDEKMFLKRGGKYVWSKADLKLDW.

Positions 44 to 71 (KGQPRVRGEPKETQETHEDPGSAQPTTP) are disordered. Basic and acidic residues predominate over residues 49–63 (VRGEPKETQETHEDP). The Radical SAM core domain maps to 68–288 (PTTPVSVNYH…LQRHKDVSCL (221 aa)). [4Fe-4S] cluster is bound by residues Cys82, Cys86, and Cys89. Lys196 carries the post-translational modification N6-acetyllysine. Lys205 is covalently cross-linked (Glycyl lysine isopeptide (Lys-Gly) (interchain with G-Cter in ubiquitin)).

The protein belongs to the radical SAM superfamily. RSAD2 family. Homodimer. Interacts with IRAK1 and TRAF6. Interacts with FPPS. Interacts with HADHB. Interacts (via C-terminus) with VAPA/VAP33 (via C-terminus). The cofactor is [4Fe-4S] cluster. Acetylated by HAT1. HAT1-mediated acetylation of Lys-196 in turn recruits UBE4A that stimulates RSAD2 polyubiquitination leading to proteasomal degradation. Post-translationally, 'Lys-6'-linked polyubiquitination at Lys-205 leads to RSAD2 protein degradation. In neonatal rat tibia, specifically localized in cells of the periosteum, in osteoblasts lining endosteal and peristeal bone surfaces, to articular surfaces of cartilage and in perichondral cells but not in chondrocytes (at protein level). Expressed predominantly in bone marrow and spleen.

Its subcellular location is the endoplasmic reticulum membrane. It is found in the golgi apparatus. The protein localises to the endoplasmic reticulum. The protein resides in the lipid droplet. It localises to the mitochondrion. Its subcellular location is the mitochondrion inner membrane. It is found in the mitochondrion outer membrane. It catalyses the reaction CTP + AH2 + S-adenosyl-L-methionine = 3'-deoxy-3',4'-didehydro-CTP + 5'-deoxyadenosine + L-methionine + A + H2O + H(+). With respect to regulation, IRAK1 and TRAF6 synergistically activate RSAD2 increasing its activity with CTP as substrate about 10-fold. Its function is as follows. Interferon-inducible antiviral protein which plays a major role in the cell antiviral state induced by type I and type II interferon. Catalyzes the conversion of cytidine triphosphate (CTP) to 3'-deoxy-3',4'-didehydro-CTP (ddhCTP) via a SAM-dependent radical mechanism. In turn, ddhCTP acts as a chain terminator for the RNA-dependent RNA polymerases from multiple viruses and directly inhibits viral replication. Therefore, inhibits a wide range of DNA and RNA viruses. Also promotes TLR7 and TLR9-dependent production of IFN-beta production in plasmacytoid dendritic cells (pDCs) by facilitating 'Lys-63'-linked ubiquitination of IRAK1 by TRAF6. Plays a role in CD4+ T-cells activation and differentiation. Facilitates T-cell receptor (TCR)-mediated GATA3 activation and optimal T-helper 2 (Th2) cytokine production by modulating NFKB1 and JUNB activities. Can inhibit secretion of soluble proteins. The chain is S-adenosylmethionine-dependent nucleotide dehydratase RSAD2 from Rattus norvegicus (Rat).